A 204-amino-acid chain; its full sequence is Large ribosomal subunit protein uL13 (204 aa).

This sequence belongs to the universal ribosomal protein uL13 family.

The polypeptide is Large ribosomal subunit protein uL13 (RpL13A) (Spodoptera frugiperda (Fall armyworm)).